The following is an 815-amino-acid chain: Bifunctional aspartokinase/homoserine dehydrogenase (815 aa).

Positions 1–249 (MRVLKFGGTS…VPDARLLPTL (249 aa)) are aspartokinase. Positions 250–470 (SYREAMELSY…NNKKVVDMFL (221 aa)) are interface. 2 ACT domains span residues 320 to 392 (VSGP…PIEV) and 401 to 478 (VVGD…GVGG). A homoserine dehydrogenase region spans residues 471–815 (VGVGGVGGEL…FADILRTLQH (345 aa)). The NAD(+) site is built by Val473, Gly475, Val476, Ala504, and Thr555. NADP(+) is bound at residue Val476. Val476 lines the NADPH pocket. Thr555 provides a ligand contact to NADP(+). Thr555, Ser556, and Lys579 together coordinate NADPH. Position 579 (Lys579) interacts with NADP(+). Na(+) is bound by residues Glu606, Val609, Ala611, and Leu613. Residues Gly664 and Glu667 each contribute to the NADP(+) site. Glu667 and Asp678 together coordinate L-homoserine. Lys682 (proton donor) is an active-site residue. Residue Gly797 participates in NAD(+) binding. Gly797 is an NADP(+) binding site. An NADPH-binding site is contributed by Gly797.

The protein in the N-terminal section; belongs to the aspartokinase family. This sequence in the C-terminal section; belongs to the homoserine dehydrogenase family. In terms of assembly, homotetramer. Requires a metal cation as cofactor.

It catalyses the reaction L-homoserine + NADP(+) = L-aspartate 4-semialdehyde + NADPH + H(+). It carries out the reaction L-homoserine + NAD(+) = L-aspartate 4-semialdehyde + NADH + H(+). The enzyme catalyses L-aspartate + ATP = 4-phospho-L-aspartate + ADP. Its pathway is amino-acid biosynthesis; L-lysine biosynthesis via DAP pathway; (S)-tetrahydrodipicolinate from L-aspartate: step 1/4. It functions in the pathway amino-acid biosynthesis; L-methionine biosynthesis via de novo pathway; L-homoserine from L-aspartate: step 1/3. It participates in amino-acid biosynthesis; L-methionine biosynthesis via de novo pathway; L-homoserine from L-aspartate: step 3/3. The protein operates within amino-acid biosynthesis; L-threonine biosynthesis; L-threonine from L-aspartate: step 1/5. Its pathway is amino-acid biosynthesis; L-threonine biosynthesis; L-threonine from L-aspartate: step 3/5. Functionally, bifunctional aspartate kinase and homoserine dehydrogenase that catalyzes the first and the third steps toward the synthesis of lysine, methionine and threonine from aspartate. This is Bifunctional aspartokinase/homoserine dehydrogenase (thrA) from Haemophilus influenzae (strain ATCC 51907 / DSM 11121 / KW20 / Rd).